A 694-amino-acid polypeptide reads, in one-letter code: Elongation factor G 1 (694 aa).

The tr-type G domain occupies 5-280; it reads SRYRNIGIFA…AVVDYLPDPT (276 aa). Residues 14 to 21, 78 to 82, and 132 to 135 each bind GTP; these read AHVDAGKT, DTPGH, and NKLD.

The protein belongs to the TRAFAC class translation factor GTPase superfamily. Classic translation factor GTPase family. EF-G/EF-2 subfamily.

The protein localises to the cytoplasm. Catalyzes the GTP-dependent ribosomal translocation step during translation elongation. During this step, the ribosome changes from the pre-translocational (PRE) to the post-translocational (POST) state as the newly formed A-site-bound peptidyl-tRNA and P-site-bound deacylated tRNA move to the P and E sites, respectively. Catalyzes the coordinated movement of the two tRNA molecules, the mRNA and conformational changes in the ribosome. The sequence is that of Elongation factor G 1 from Methylococcus capsulatus (strain ATCC 33009 / NCIMB 11132 / Bath).